A 188-amino-acid polypeptide reads, in one-letter code: CASP-like protein 4B1 (188 aa).

Positions 1 to 11 are enriched in basic and acidic residues; the sequence is MTNPDKQKPVE. Positions 1-34 are disordered; that stretch reads MTNPDKQKPVEVTDVETAAEKTSEPTPASGTSTI. Residues 1 to 46 lie on the Cytoplasmic side of the membrane; that stretch reads MTNPDKQKPVEVTDVETAAEKTSEPTPASGTSTITQRWKREDLIKK. Residues 24–34 show a composition bias toward polar residues; the sequence is EPTPASGTSTI. A helical transmembrane segment spans residues 47 to 67; it reads ASPITRGICLLFSLLAFLIMV. Over 68-84 the chain is Extracellular; the sequence is SNKHGYGRNFNEYEEYR. Residues 85–105 form a helical membrane-spanning segment; sequence YVLAISIISTLYTAWQTFAHF. The Cytoplasmic portion of the chain corresponds to 106–120; that stretch reads SKREFFDRRTSTLVD. The helical transmembrane segment at 121-141 threads the bilayer; it reads FSGDQIVAYLLISAASSAIPL. The Extracellular portion of the chain corresponds to 142–156; sequence TNRFREGQDNIFTDS. The helical transmembrane segment at 157–177 threads the bilayer; it reads AASAISMAIFAFVALALSALF. Topologically, residues 178–188 are cytoplasmic; the sequence is SGYKLSTHSFI.

It belongs to the Casparian strip membrane proteins (CASP) family. As to quaternary structure, homodimer and heterodimers.

Its subcellular location is the cell membrane. In Arabidopsis lyrata subsp. lyrata (Lyre-leaved rock-cress), this protein is CASP-like protein 4B1.